A 486-amino-acid polypeptide reads, in one-letter code: Protein kinase C and casein kinase substrate in neurons protein 2 (486 aa).

Residues 11–282 enclose the F-BAR domain; sequence VEVSSDSFWE…SIKAADAVED (272 aa). The stretch at 25–274 forms a coiled coil; the sequence is KRTVKRIDDG…TIYRELEQSI (250 aa). Residue lysine 53 is modified to N6-acetyllysine. A Phosphoserine modification is found at serine 273. Residue serine 313 is modified to Phosphoserine; by PKC. A disordered region spans residues 315-426; that stretch reads REKKKAVDGV…NPFDEDTTSG (112 aa). Positions 327–362 are enriched in polar residues; sequence TGINQTGDQSGQNKPGSNLSVPSNPAQSTQLQSSYN. Positions 362-364 match the NPF1 motif; it reads NPF. Serine 373 carries the phosphoserine; by IKKB modification. The span at 384-396 shows a compositional bias: polar residues; it reads NVSSYEKTQTYPT. Position 399 is a phosphoserine (serine 399). The segment covering 404–416 has biased composition (polar residues); it reads NNPFSSTDANGDS. An NPF2 motif is present at residues 405–407; sequence NPF. The NPF3 motif lies at 417 to 419; it reads NPF. An SH3 domain is found at 426-486; sequence GTEVRVRALY…YPANYVEAIQ (61 aa). Serine 446 bears the Phosphoserine mark.

The protein belongs to the PACSIN family. As to quaternary structure, homodimer. May form heterooligomers with other PACSINs. Interacts (via NPF motifs) with EHD1 (via EH domain). Interacts (via NPF motifs) with EHD2 (via EH domain); this interaction probably stabilizes the caveolae. Interacts with EHD3. Interacts (via the SH3 domain) with MICALL1. Interacts with RAC1. Interacts (via SH3 domain) with DNM1, SYN1, SYNJ1 and WASL. Interacts (via F-BAR domain) with CAV1; this interaction induces membrane tubulation. Interacts with TRPV4. Forms a complex with EHD4 and MICALL1; the complex controls CDH5 trafficking and coordinates angiogenesis. In terms of processing, phosphorylated by casein kinase 2 (CK2). Phosphorylation by PKC probably decreases the membrane binding and tubulation capacities of PACSIN2, thereby modulating the lifetime of caveolae. Widely expressed (at protein level).

Its subcellular location is the cytoplasm. It is found in the cytoskeleton. The protein resides in the cytoplasmic vesicle membrane. The protein localises to the cell projection. It localises to the ruffle membrane. Its subcellular location is the early endosome. It is found in the recycling endosome membrane. The protein resides in the cell membrane. The protein localises to the membrane. It localises to the caveola. Its subcellular location is the cell junction. It is found in the adherens junction. Regulates the morphogenesis and endocytosis of caveolae. Lipid-binding protein that is able to promote the tubulation of the phosphatidic acid-containing membranes it preferentially binds. Plays a role in intracellular vesicle-mediated transport. Involved in the endocytosis of cell-surface receptors like the EGF receptor, contributing to its internalization in the absence of EGF stimulus. Essential for endothelial organization in sprouting angiogenesis, modulates CDH5-based junctions. Facilitates endothelial front-rear polarity during migration by recruiting EHD4 and MICALL1 to asymmetric adherens junctions between leader and follower cells. The sequence is that of Protein kinase C and casein kinase substrate in neurons protein 2 (Pacsin2) from Mus musculus (Mouse).